The primary structure comprises 443 residues: tRNA modification GTPase MnmE (443 aa).

Residues R23, E80, and K120 each coordinate (6S)-5-formyl-5,6,7,8-tetrahydrofolate. The TrmE-type G domain occupies 217–367 (GFEVVILGAP…LLAEIGRRAA (151 aa)). GTP-binding positions include 227–232 (NAGKSS), 246–252 (TDEPGTT), and 271–274 (DTAG). The Mg(2+) site is built by S231 and T252. Residue K443 coordinates (6S)-5-formyl-5,6,7,8-tetrahydrofolate.

This sequence belongs to the TRAFAC class TrmE-Era-EngA-EngB-Septin-like GTPase superfamily. TrmE GTPase family. As to quaternary structure, homodimer. Heterotetramer of two MnmE and two MnmG subunits. K(+) is required as a cofactor.

It is found in the cytoplasm. In terms of biological role, exhibits a very high intrinsic GTPase hydrolysis rate. Involved in the addition of a carboxymethylaminomethyl (cmnm) group at the wobble position (U34) of certain tRNAs, forming tRNA-cmnm(5)s(2)U34. This is tRNA modification GTPase MnmE from Mesorhizobium japonicum (strain LMG 29417 / CECT 9101 / MAFF 303099) (Mesorhizobium loti (strain MAFF 303099)).